The following is a 670-amino-acid chain: Leucine zipper putative tumor suppressor 2 (670 aa).

Disordered stretches follow at residues 1-52 (MAIV…GVPG), 92-131 (NEDF…IPVS), and 150-323 (PVLP…PSDE). The required for centrosomal localization stretch occupies residues 1–333 (MAIVQTLPVP…ALLHCVLEGK (333 aa)). Residues 187-199 (ASSSSSSSSSSAA) are compositionally biased toward low complexity. Residues 213 to 233 (PSGTLSDSGRNSLSSLPTYST) are compositionally biased toward polar residues. Composition is skewed to low complexity over residues 242 to 251 (SPGGHLPSHG) and 260 to 310 (PARG…GGDR). 2 positions are modified to phosphoserine: Ser249 and Ser296. Pro residues predominate over residues 311 to 321 (SPPPPPPPPPS). Positions 329 to 650 (VLEGKLRDRE…LELEARELAD (322 aa)) form a coiled coil. The sufficient for interaction with CTNNB1 stretch occupies residues 448–670 (SGEISLLKQQ…CLEEITATEI (223 aa)). The tract at residues 451–670 (ISLLKQQLKE…CLEEITATEI (220 aa)) is sufficient for interaction with KATNB1 and for inhibition of katanin-mediated microtubule severing. Ser571 is subject to Phosphoserine. The Nuclear export signal motif lies at 632–641 (LEQELQQLSL).

Belongs to the LZTS2 family. In terms of assembly, interacts with CTNNB1. Interacts with KATNB1. Also interacts with gamma-tubulin and KIF23.

Its subcellular location is the cytoplasm. It is found in the cytoskeleton. The protein localises to the microtubule organizing center. It localises to the centrosome. Its function is as follows. Negative regulator of katanin-mediated microtubule severing and release from the centrosome. Required for central spindle formation and the completion of cytokinesis. May negatively regulate axonal outgrowth by preventing the formation of microtubule bundles that are necessary for transport within the elongating axon. Negative regulator of the Wnt signaling pathway. Represses beta-catenin-mediated transcriptional activation by promoting the nuclear exclusion of beta-catenin. In Rattus norvegicus (Rat), this protein is Leucine zipper putative tumor suppressor 2 (Lzts2).